Here is a 227-residue protein sequence, read N- to C-terminus: Cytochrome c oxidase subunit 2 (227 aa).

The Mitochondrial intermembrane segment spans residues 1-14; sequence MAYPMQLGFQDATS. The chain crosses the membrane as a helical span at residues 15–45; it reads PIMEELLHFHDHTLMIVFLISSLVLYIISLM. The Mitochondrial matrix segment spans residues 46–59; sequence LTTKLTHTSTMDAQ. The helical transmembrane segment at 60 to 87 threads the bilayer; sequence EVETIWTILPAIILILIALPSLRILYMM. Topologically, residues 88 to 227 are mitochondrial intermembrane; that stretch reads DEINNPSLTV…YFEKWSASML (140 aa). Cu cation contacts are provided by H161, C196, E198, C200, H204, and M207. E198 is a binding site for Mg(2+). Phosphotyrosine is present on Y218.

It belongs to the cytochrome c oxidase subunit 2 family. In terms of assembly, component of the cytochrome c oxidase (complex IV, CIV), a multisubunit enzyme composed of 14 subunits. The complex is composed of a catalytic core of 3 subunits MT-CO1, MT-CO2 and MT-CO3, encoded in the mitochondrial DNA, and 11 supernumerary subunits COX4I, COX5A, COX5B, COX6A, COX6B, COX6C, COX7A, COX7B, COX7C, COX8 and NDUFA4, which are encoded in the nuclear genome. The complex exists as a monomer or a dimer and forms supercomplexes (SCs) in the inner mitochondrial membrane with NADH-ubiquinone oxidoreductase (complex I, CI) and ubiquinol-cytochrome c oxidoreductase (cytochrome b-c1 complex, complex III, CIII), resulting in different assemblies (supercomplex SCI(1)III(2)IV(1) and megacomplex MCI(2)III(2)IV(2)). Found in a complex with TMEM177, COA6, COX18, COX20, SCO1 and SCO2. Interacts with TMEM177 in a COX20-dependent manner. Interacts with COX20. Interacts with COX16. Requires Cu cation as cofactor.

It is found in the mitochondrion inner membrane. It catalyses the reaction 4 Fe(II)-[cytochrome c] + O2 + 8 H(+)(in) = 4 Fe(III)-[cytochrome c] + 2 H2O + 4 H(+)(out). In terms of biological role, component of the cytochrome c oxidase, the last enzyme in the mitochondrial electron transport chain which drives oxidative phosphorylation. The respiratory chain contains 3 multisubunit complexes succinate dehydrogenase (complex II, CII), ubiquinol-cytochrome c oxidoreductase (cytochrome b-c1 complex, complex III, CIII) and cytochrome c oxidase (complex IV, CIV), that cooperate to transfer electrons derived from NADH and succinate to molecular oxygen, creating an electrochemical gradient over the inner membrane that drives transmembrane transport and the ATP synthase. Cytochrome c oxidase is the component of the respiratory chain that catalyzes the reduction of oxygen to water. Electrons originating from reduced cytochrome c in the intermembrane space (IMS) are transferred via the dinuclear copper A center (CU(A)) of subunit 2 and heme A of subunit 1 to the active site in subunit 1, a binuclear center (BNC) formed by heme A3 and copper B (CU(B)). The BNC reduces molecular oxygen to 2 water molecules using 4 electrons from cytochrome c in the IMS and 4 protons from the mitochondrial matrix. This chain is Cytochrome c oxidase subunit 2 (MT-CO2), found in Bison bonasus (European bison).